Here is a 374-residue protein sequence, read N- to C-terminus: PqqA peptide cyclase (374 aa).

Residues 7 to 222 (VTPPLWLLAE…VADYRQRMGA (216 aa)) enclose the Radical SAM core domain. 3 residues coordinate [4Fe-4S] cluster: Cys-21, Cys-25, and Cys-28.

This sequence belongs to the radical SAM superfamily. PqqE family. As to quaternary structure, interacts with PqqD. The interaction is necessary for activity of PqqE. [4Fe-4S] cluster serves as cofactor.

The enzyme catalyses [PQQ precursor protein] + S-adenosyl-L-methionine = E-Y cross-linked-[PQQ precursor protein] + 5'-deoxyadenosine + L-methionine + H(+). The protein operates within cofactor biosynthesis; pyrroloquinoline quinone biosynthesis. Catalyzes the cross-linking of a glutamate residue and a tyrosine residue in the PqqA protein as part of the biosynthesis of pyrroloquinoline quinone (PQQ). The chain is PqqA peptide cyclase from Kluyvera intermedia (Enterobacter intermedius).